The sequence spans 274 residues: Thiamine kinase (274 aa).

This sequence belongs to the thiamine kinase family.

The catalysed reaction is thiamine + ATP = thiamine phosphate + ADP + H(+). It participates in cofactor biosynthesis; thiamine diphosphate biosynthesis; thiamine phosphate from thiamine: step 1/1. Catalyzes the ATP-dependent phosphorylation of thiamine to thiamine phosphate. Is involved in thiamine salvage. This Shigella flexneri serotype 5b (strain 8401) protein is Thiamine kinase.